A 497-amino-acid chain; its full sequence is Acetyl-coenzyme A carboxylase carboxyl transferase subunit beta, chloroplastic (497 aa).

One can recognise a CoA carboxyltransferase N-terminal domain in the interval 230–497; that stretch reads LWIQCENCYG…FFPLNQNSIK (268 aa). Zn(2+) contacts are provided by Cys-234, Cys-237, Cys-253, and Cys-256. Residues 234–256 form a C4-type zinc finger; the sequence is CENCYGLNYKKFFRSKMNICEQC.

This sequence belongs to the AccD/PCCB family. Acetyl-CoA carboxylase is a heterohexamer composed of biotin carboxyl carrier protein, biotin carboxylase and 2 subunits each of ACCase subunit alpha and ACCase plastid-coded subunit beta (accD). Requires Zn(2+) as cofactor.

The protein resides in the plastid. The protein localises to the chloroplast stroma. The enzyme catalyses N(6)-carboxybiotinyl-L-lysyl-[protein] + acetyl-CoA = N(6)-biotinyl-L-lysyl-[protein] + malonyl-CoA. Its pathway is lipid metabolism; malonyl-CoA biosynthesis; malonyl-CoA from acetyl-CoA: step 1/1. Its function is as follows. Component of the acetyl coenzyme A carboxylase (ACC) complex. Biotin carboxylase (BC) catalyzes the carboxylation of biotin on its carrier protein (BCCP) and then the CO(2) group is transferred by the transcarboxylase to acetyl-CoA to form malonyl-CoA. In Platanus occidentalis (Sycamore), this protein is Acetyl-coenzyme A carboxylase carboxyl transferase subunit beta, chloroplastic.